A 415-amino-acid chain; its full sequence is Vascular endothelial growth factor C (415 aa).

Positions 1-31 (MHLLCFLSLACSLLAAALIPSPREAPATVAA) are cleaved as a signal peptide. Residues 32-107 (FESGLGFSEA…RTGDSVKFAA (76 aa)) constitute a propeptide that is removed on maturation. Cystine bridges form between cysteine 127–cysteine 169, cysteine 158–cysteine 205, and cysteine 162–cysteine 207. 3 N-linked (GlcNAc...) asparagine glycosylation sites follow: asparagine 171, asparagine 201, and asparagine 236. Positions 224–415 (SLPATLPQCQ…PSYWKRPHLN (192 aa)) are excised as a propeptide. 4 consecutive repeat copies span residues 276–291 (CGPN…QCVC), 300–315 (CGPH…QCVC), 324–339 (CGAN…QCVC), and 343–358 (CPRN…ACEC). The 4 X 16 AA repeats of C-X(10)-C-X-C-X(1,3)-C stretch occupies residues 276–358 (CGPNKELDED…LNPGKCACEC (83 aa)).

Belongs to the PDGF/VEGF growth factor family. In terms of assembly, homodimer; non-covalent and antiparallel. Interacts with FLT4/VEGFR3; the interaction is required for FLT4/VEGFR3 homodimarization and activation. Post-translationally, undergoes a complex proteolytic maturation which generates a variety of processed secreted forms with increased activity toward VEGFR-3, but only the fully processed form could activate VEGFR-2. VEGF-C first form an antiparallel homodimer linked by disulfide bonds. Before secretion, a cleavage occurs between Arg-223 and Ser-224 producing a heterotetramer. The next extracellular step of the processing removes the N-terminal propeptide. Finally the mature VEGF-C is composed mostly of two VEGF homology domains (VHDs) bound by non-covalent interactions. Expressed in adult heart, brain, spleen, lung, liver, skeletal muscle, kidney, testis and intestine with higher levels in heart, brain and kidney. Isoform 4 levels are very low. Isoform 3 is mostly expressed in liver and has reduced expression level in other tissues. Isoform 2 is mostly expressed in brain and kidney, although a lower level expression in other tissues is also detectable.

Its subcellular location is the secreted. In terms of biological role, growth factor active in angiogenesis, and endothelial cell growth, stimulating their proliferation and migration and also has effects on the permeability of blood vessels. May function in angiogenesis of the venous and lymphatic vascular systems during embryogenesis, and also in the maintenance of differentiated lymphatic endothelium in adults. Binds and activates KDR/VEGFR2 and FLT4/VEGFR3 receptors. The protein is Vascular endothelial growth factor C (Vegfc) of Mus musculus (Mouse).